The primary structure comprises 105 residues: Large ribosomal subunit protein uL24 (105 aa).

Belongs to the universal ribosomal protein uL24 family. In terms of assembly, part of the 50S ribosomal subunit.

In terms of biological role, one of two assembly initiator proteins, it binds directly to the 5'-end of the 23S rRNA, where it nucleates assembly of the 50S subunit. Functionally, one of the proteins that surrounds the polypeptide exit tunnel on the outside of the subunit. This Nitrosococcus oceani (strain ATCC 19707 / BCRC 17464 / JCM 30415 / NCIMB 11848 / C-107) protein is Large ribosomal subunit protein uL24.